The following is a 904-amino-acid chain: MVSFGGIARKLFGSSNDRRVRSFQPNVTAINSIEEKTKALTDEQLAAKTAEFRALLAEGKTLDDILIPAFAVVREASRRVLDLRPFDVQLIGGMILHSNAIAEMKTGEGKTLVATLPVYLNALSGKGVHVVTVNDYLAQRDAATMGRVYGFLGMTTGVIVHGLSDEERRAAYACDITYATNNELGFDYLRDNMKYEKNQMVQRGHNFAIVDEVDSILVDEARTPLIISGPLDDRSELYNTIDAFIPLLVPSDYEIDEKQRSANFSEEGTEKLENMLRQAGLLKGNALYDIENVAIVHHINNALKAHKLFQRDKDYIVRNGEVVIIDEFTGRMMPGRRYSEGQHQALEAKEKVQIQPENQTLASITFQNYFRMYDKLAGMTGTAQTEAEEFGNIYNLDVIEVPTNLPIKRIDEDDEVYRTFDEKFKAIIEEILDAHKRGQPVLVGTTSIEKSELLAERLRKQGFNDFQVLNARYHEQEAYIVAQAGVPGAVTIATNMAGRGTDIQLGGNLEMRIERELGEIEAGPEREARIQAIVEEIKELKQKALTAGGLYVIATERHESRRIDNQLRGRSGRQGDPGRSKFYLSLQDDLMRIFGSDRMDSMLTKLGLKEGEAIVHPWINKALERAQKKVEARNFDIRKNLLKYDDVLNDQRKVIFEQRLELMESTNISETVSDMRREVIEDLVEKHIPERAYAEQWDAVGLKTGVTNILNLDLPIEDWFKEEGIGEDDIRERLTEAANAAFTEKAERFGDDIMHYVERSIVMQTLDHLWREHIVNLDHLRSVIGFRGYAQRDPLQEYKSEAFELFTGLLNNLREAVTAQLMRVELVQQAPAEPEPPLMQAHHLDPMTGEDDFAPIYQASEVIVAPENRNPEDPTTWGKIGRNEACPCGSGKKYKHCHGAFEQV.

ATP is bound by residues Gln-89, 107–111, and Asp-502; that span reads GEGKT. Zn(2+)-binding residues include Cys-886, Cys-888, Cys-897, and His-898.

It belongs to the SecA family. In terms of assembly, monomer and homodimer. Part of the essential Sec protein translocation apparatus which comprises SecA, SecYEG and auxiliary proteins SecDF-YajC and YidC. Requires Zn(2+) as cofactor.

Its subcellular location is the cell inner membrane. The protein resides in the cytoplasm. The enzyme catalyses ATP + H2O + cellular proteinSide 1 = ADP + phosphate + cellular proteinSide 2.. Functionally, part of the Sec protein translocase complex. Interacts with the SecYEG preprotein conducting channel. Has a central role in coupling the hydrolysis of ATP to the transfer of proteins into and across the cell membrane, serving both as a receptor for the preprotein-SecB complex and as an ATP-driven molecular motor driving the stepwise translocation of polypeptide chains across the membrane. This chain is Protein translocase subunit SecA, found in Rhizobium etli (strain CIAT 652).